Reading from the N-terminus, the 307-residue chain is Glutaminase 1 (307 aa).

S62, N114, E159, N166, Y190, Y242, and V260 together coordinate substrate.

The protein belongs to the glutaminase family. In terms of assembly, homotetramer.

It carries out the reaction L-glutamine + H2O = L-glutamate + NH4(+). This chain is Glutaminase 1, found in Clostridium perfringens (strain 13 / Type A).